Consider the following 302-residue polypeptide: Glutaminase (302 aa).

Residues Ser61, Asn111, Glu155, Asn162, Tyr186, Tyr238, and Val256 each contribute to the substrate site.

It belongs to the glutaminase family. As to quaternary structure, homotetramer.

The enzyme catalyses L-glutamine + H2O = L-glutamate + NH4(+). The chain is Glutaminase from Pseudomonas savastanoi pv. phaseolicola (strain 1448A / Race 6) (Pseudomonas syringae pv. phaseolicola (strain 1448A / Race 6)).